Reading from the N-terminus, the 217-residue chain is Kunitz-type trypsin inhibitor-like 2 protein (217 aa).

Positions 1–26 (MKPLSPLTLSFLLFVFITTLSLAFSN) are cleaved as a signal peptide. Intrachain disulfides connect Cys70/Cys115 and Cys168/Cys175. A glycan (N-linked (GlcNAc...) asparagine) is linked at Asn191.

Belongs to the protease inhibitor I3 (leguminous Kunitz-type inhibitor) family.

The protein resides in the secreted. In terms of biological role, might act as a protease inhibitor involved in plant defense responses. This is Kunitz-type trypsin inhibitor-like 2 protein (PIP20-2) from Pisum sativum (Garden pea).